A 303-amino-acid polypeptide reads, in one-letter code: Succinate--CoA ligase [ADP-forming] subunit alpha (303 aa).

CoA is bound by residues 20 to 23 (TGSE), K46, and 108 to 110 (ITE). Substrate is bound at residue Y173. The active-site Tele-phosphohistidine intermediate is the H259.

Belongs to the succinate/malate CoA ligase alpha subunit family. As to quaternary structure, heterotetramer of two alpha and two beta subunits.

It catalyses the reaction succinate + ATP + CoA = succinyl-CoA + ADP + phosphate. The enzyme catalyses GTP + succinate + CoA = succinyl-CoA + GDP + phosphate. It participates in carbohydrate metabolism; tricarboxylic acid cycle; succinate from succinyl-CoA (ligase route): step 1/1. Succinyl-CoA synthetase functions in the citric acid cycle (TCA), coupling the hydrolysis of succinyl-CoA to the synthesis of either ATP or GTP and thus represents the only step of substrate-level phosphorylation in the TCA. The alpha subunit of the enzyme binds the substrates coenzyme A and phosphate, while succinate binding and nucleotide specificity is provided by the beta subunit. The chain is Succinate--CoA ligase [ADP-forming] subunit alpha from Mycobacterium tuberculosis (strain CDC 1551 / Oshkosh).